The primary structure comprises 444 residues: Viral protein kinase (444 aa).

The segment at 1-25 (MRWKRMERRPPLTPLRRSRTQSSGG) is disordered. ATP contacts are provided by residues 90–98 (LGRGAFGII) and K108. Catalysis depends on D201, which acts as the Proton acceptor.

As to quaternary structure, interacts with protein K-bZIP/K8. Interacts with host beta-catenin/CTNNB1. Post-translationally, AUtophosphorylated.

Its subcellular location is the host nucleus. It catalyses the reaction L-seryl-[protein] + ATP = O-phospho-L-seryl-[protein] + ADP + H(+). It carries out the reaction L-threonyl-[protein] + ATP = O-phospho-L-threonyl-[protein] + ADP + H(+). Functionally, serine/threonine protein kinase that plays a role in viral gene expression, viral DNA replication and encapsidation, and nuclear egress of virions. Regulates host transcriptional activity through interactions with RNA helicase and c-Jun N-terminal kinase (JNK) and viral transcriptional activity through interactions with the viral protein K-bZIP/K8. Induces host chromosome condensation and phosphorylation of histone H3. Phosphorylates the DNA polymerase processivity factor hence modulating its processivity function. Inhibits the host Wnt signaling pathway via direct interactions with beta-catenin/CTNNB1 while the kinase activity of vPK is not required for this inhibitory activity. Also phosphorylates host SAMHD1 and thereby counteracts its antiviral effect by reducing its dNTP hydrolase activity. This is Viral protein kinase (vPK) from Human herpesvirus 8 type P (isolate GK18) (HHV-8).